The primary structure comprises 65 residues: UPF0434 protein IL1511 (65 aa).

This sequence belongs to the UPF0434 family.

In Idiomarina loihiensis (strain ATCC BAA-735 / DSM 15497 / L2-TR), this protein is UPF0434 protein IL1511.